Here is a 374-residue protein sequence, read N- to C-terminus: GDSL esterase/lipase At1g71250 (374 aa).

The signal sequence occupies residues 1–28 (MNTNRKKMKVHIGGYVLILALTVSVILQ). Ser48 serves as the catalytic Nucleophile. Asn162 carries an N-linked (GlcNAc...) asparagine glycan. Active-site residues include Asp338 and His341.

It belongs to the 'GDSL' lipolytic enzyme family.

The protein localises to the secreted. This is GDSL esterase/lipase At1g71250 from Arabidopsis thaliana (Mouse-ear cress).